The sequence spans 319 residues: Acetyl esterase (319 aa).

The Involved in the stabilization of the negatively charged intermediate by the formation of the oxyanion hole signature appears at His-91–Gly-93. Residues Ser-165, Asp-262, and His-292 contribute to the active site.

The protein belongs to the 'GDXG' lipolytic enzyme family. As to quaternary structure, homodimer. Interacts with MalT and MelA.

The protein resides in the cytoplasm. Functionally, displays esterase activity towards short chain fatty esters (acyl chain length of up to 8 carbons). Able to hydrolyze triacetylglycerol (triacetin) and tributyrylglycerol (tributyrin), but not trioleylglycerol (triolein) or cholesterol oleate. Negatively regulates MalT activity by antagonizing maltotriose binding. Inhibits MelA galactosidase activity. The protein is Acetyl esterase of Escherichia coli (strain ATCC 8739 / DSM 1576 / NBRC 3972 / NCIMB 8545 / WDCM 00012 / Crooks).